A 352-amino-acid chain; its full sequence is Anthranilate phosphoribosyltransferase (352 aa).

5-phospho-alpha-D-ribose 1-diphosphate-binding positions include G83, G86–D87, T91, N93–T96, K111–S119, and A123. G83 lines the anthranilate pocket. Residue S95 participates in Mg(2+) binding. R169 is an anthranilate binding site. The Mg(2+) site is built by D228 and E229.

Belongs to the anthranilate phosphoribosyltransferase family. Homodimer. Mg(2+) is required as a cofactor.

The catalysed reaction is N-(5-phospho-beta-D-ribosyl)anthranilate + diphosphate = 5-phospho-alpha-D-ribose 1-diphosphate + anthranilate. Its pathway is amino-acid biosynthesis; L-tryptophan biosynthesis; L-tryptophan from chorismate: step 2/5. Functionally, catalyzes the transfer of the phosphoribosyl group of 5-phosphorylribose-1-pyrophosphate (PRPP) to anthranilate to yield N-(5'-phosphoribosyl)-anthranilate (PRA). This chain is Anthranilate phosphoribosyltransferase, found in Neisseria meningitidis serogroup A / serotype 4A (strain DSM 15465 / Z2491).